A 327-amino-acid polypeptide reads, in one-letter code: Regulatory protein MsrR (327 aa).

A compositionally biased stretch (basic and acidic residues) spans 1 to 18 (MDKETNDNEYRRQSEHRT). Residues 1–24 (MDKETNDNEYRRQSEHRTSAPKRK) are disordered. The Cytoplasmic segment spans residues 1-31 (MDKETNDNEYRRQSEHRTSAPKRKKKKKIRK). The helical; Signal-anchor for type II membrane protein transmembrane segment at 32–52 (LPIILLIVVILLIALVVYIVH) threads the bilayer. At 53–327 (SYNSGVEYAK…QAIKDFLDED (275 aa)) the chain is on the extracellular side.

The protein belongs to the LytR/CpsA/Psr (LCP) family.

It is found in the cell membrane. Functionally, involved in SarA attenuation. Affects resistance to oxacillin and teicoplanin, as well as the synthesis of virulence factors. The chain is Regulatory protein MsrR (msrR) from Staphylococcus aureus (strain NCTC 8325 / PS 47).